We begin with the raw amino-acid sequence, 322 residues long: Thioredoxin reductase (322 aa).

Residues 12–15, 34–42, asparagine 51, and valine 84 contribute to the FAD site; these read SGPA and EGAVTAGGA. Cysteine 136 and cysteine 139 form a disulfide bridge. Residues histidine 176, arginine 182, and tyrosine 259 each coordinate NADP(+). Residues aspartate 279 and 286–289 each bind FAD; that span reads RQAI. Arginine 286 contributes to the NADP(+) binding site.

Belongs to the class-II pyridine nucleotide-disulfide oxidoreductase family. In terms of assembly, homodimer. FAD is required as a cofactor.

It carries out the reaction [thioredoxin]-dithiol + NADP(+) = [thioredoxin]-disulfide + NADPH + H(+). Functionally, component of the thioredoxin-thioredoxin reductase system which may be involved in biosynthesis of penicillins and cephalosporins and may be important in determining the thiol-disulfide redox balance. The protein is Thioredoxin reductase of Streptomyces clavuligerus.